Reading from the N-terminus, the 390-residue chain is uncharacterized protein (390 aa).

This is an uncharacterized protein from Orgyia pseudotsugata multicapsid polyhedrosis virus (OpMNPV).